A 506-amino-acid polypeptide reads, in one-letter code: Cysteine--tRNA ligase (506 aa).

Cys34 provides a ligand contact to Zn(2+). The 'HIGH' region signature appears at 36–46 (PTVYDFAHIGN). Zn(2+) contacts are provided by Cys230, His269, and Glu273. Positions 302-306 (KMSKS) match the 'KMSKS' region motif. Lys305 is a binding site for ATP.

This sequence belongs to the class-I aminoacyl-tRNA synthetase family. As to quaternary structure, monomer. It depends on Zn(2+) as a cofactor.

It is found in the cytoplasm. The enzyme catalyses tRNA(Cys) + L-cysteine + ATP = L-cysteinyl-tRNA(Cys) + AMP + diphosphate. The sequence is that of Cysteine--tRNA ligase from Brucella abortus (strain S19).